The following is a 125-amino-acid chain: Holo-[acyl-carrier-protein] synthase (125 aa).

Mg(2+)-binding residues include aspartate 8 and glutamate 57.

It belongs to the P-Pant transferase superfamily. AcpS family. Mg(2+) serves as cofactor.

It is found in the cytoplasm. The enzyme catalyses apo-[ACP] + CoA = holo-[ACP] + adenosine 3',5'-bisphosphate + H(+). Transfers the 4'-phosphopantetheine moiety from coenzyme A to a Ser of acyl-carrier-protein. In Geotalea daltonii (strain DSM 22248 / JCM 15807 / FRC-32) (Geobacter daltonii), this protein is Holo-[acyl-carrier-protein] synthase.